Consider the following 363-residue polypeptide: NAD(P)H-quinone oxidoreductase subunit 1, chloroplastic (363 aa).

Helical transmembrane passes span 30–50 (LVPI…IVWL), 98–118 (FSIG…VIPF), 129–149 (IGVF…LMSG), 165–185 (AAQS…ISLL), 203–223 (LWGW…ISSL), 248–268 (YSGI…LVSS), 269–289 (LFVT…IFVP), 300–320 (VFGT…FLFI), and 334–354 (DQLL…NLLL).

Belongs to the complex I subunit 1 family. In terms of assembly, NDH is composed of at least 16 different subunits, 5 of which are encoded in the nucleus.

Its subcellular location is the plastid. The protein resides in the chloroplast thylakoid membrane. It catalyses the reaction a plastoquinone + NADH + (n+1) H(+)(in) = a plastoquinol + NAD(+) + n H(+)(out). It carries out the reaction a plastoquinone + NADPH + (n+1) H(+)(in) = a plastoquinol + NADP(+) + n H(+)(out). Its function is as follows. NDH shuttles electrons from NAD(P)H:plastoquinone, via FMN and iron-sulfur (Fe-S) centers, to quinones in the photosynthetic chain and possibly in a chloroplast respiratory chain. The immediate electron acceptor for the enzyme in this species is believed to be plastoquinone. Couples the redox reaction to proton translocation, and thus conserves the redox energy in a proton gradient. This chain is NAD(P)H-quinone oxidoreductase subunit 1, chloroplastic, found in Oenothera elata subsp. hookeri (Hooker's evening primrose).